Here is a 946-residue protein sequence, read N- to C-terminus: Villin-4 (946 aa).

Gelsolin-like repeat units follow at residues 28–109 (NFKP…ETEK), 152–219 (VHVK…EDGK), 274–339 (LEHE…TIMF), and 641–715 (EIHH…PQFF). Disordered regions lie at residues 744–789 (ATPS…GRSP), 801–832 (PSTR…SSKQ), and 844–902 (GPTK…PAPD). The segment covering 765–777 (QDKSQQRTRSMSH) has biased composition (polar residues). Positions 874-883 (SENEPEDDEN) are enriched in acidic residues. In terms of domain architecture, HP spans 881–946 (DENSTIYPYE…NRLKSDLQLF (66 aa)).

This sequence belongs to the villin/gelsolin family.

The protein localises to the cytoplasm. The protein resides in the cytoskeleton. Its function is as follows. Ca(2+)-regulated actin-binding protein. Binds actin microfilaments (MFs). Involved in actin filament bundling, severing and capping. Caps the barbed end of actin filaments and is able to sever them in a calcium-dependent manner. The polypeptide is Villin-4 (Oryza sativa subsp. japonica (Rice)).